Reading from the N-terminus, the 488-residue chain is Inosine-5'-monophosphate dehydrogenase (488 aa).

2 CBS domains span residues 95–153 (VISN…SIKI) and 157–216 (MTKD…AKDE). Residues Asp250 and 300 to 302 (GIG) each bind NAD(+). K(+) is bound by residues Gly302 and Gly304. An IMP-binding site is contributed by Ser305. A K(+)-binding site is contributed by Cys307. Cys307 acts as the Thioimidate intermediate in catalysis. IMP is bound by residues 340–342 (DGG), 363–364 (GS), and 387–391 (YRGMG). The active-site Proton acceptor is the Arg403. Residue Glu417 participates in IMP binding. The interval 467–488 (AGLAESHPHNVQITKESPNYSF) is disordered. K(+)-binding residues include Glu471, Ser472, and His473. Positions 475-488 (HNVQITKESPNYSF) are enriched in polar residues.

This sequence belongs to the IMPDH/GMPR family. In terms of assembly, homotetramer. The cofactor is K(+).

The enzyme catalyses IMP + NAD(+) + H2O = XMP + NADH + H(+). It functions in the pathway purine metabolism; XMP biosynthesis via de novo pathway; XMP from IMP: step 1/1. Mycophenolic acid (MPA) is a non-competitive inhibitor that prevents formation of the closed enzyme conformation by binding to the same site as the amobile flap. In contrast, mizoribine monophosphate (MZP) is a competitive inhibitor that induces the closed conformation. MPA is a potent inhibitor of mammalian IMPDHs but a poor inhibitor of the bacterial enzymes. MZP is a more potent inhibitor of bacterial IMPDH. In terms of biological role, catalyzes the conversion of inosine 5'-phosphate (IMP) to xanthosine 5'-phosphate (XMP), the first committed and rate-limiting step in the de novo synthesis of guanine nucleotides, and therefore plays an important role in the regulation of cell growth. This Staphylococcus epidermidis (strain ATCC 35984 / DSM 28319 / BCRC 17069 / CCUG 31568 / BM 3577 / RP62A) protein is Inosine-5'-monophosphate dehydrogenase.